The chain runs to 198 residues: V-type ATP synthase subunit E (198 aa).

It belongs to the V-ATPase E subunit family.

In terms of biological role, produces ATP from ADP in the presence of a proton gradient across the membrane. This is V-type ATP synthase subunit E from Clostridium perfringens (strain ATCC 13124 / DSM 756 / JCM 1290 / NCIMB 6125 / NCTC 8237 / Type A).